Consider the following 110-residue polypeptide: Ribonuclease P protein component 4 (110 aa).

The Zn(2+) site is built by Cys-65, Cys-68, Cys-94, and Cys-97.

It belongs to the eukaryotic/archaeal RNase P protein component 4 family. Consists of a catalytic RNA component and at least 4-5 protein subunits. The cofactor is Zn(2+).

Its subcellular location is the cytoplasm. The catalysed reaction is Endonucleolytic cleavage of RNA, removing 5'-extranucleotides from tRNA precursor.. In terms of biological role, part of ribonuclease P, a protein complex that generates mature tRNA molecules by cleaving their 5'-ends. This is Ribonuclease P protein component 4 from Methanococcus maripaludis (strain C6 / ATCC BAA-1332).